A 1016-amino-acid polypeptide reads, in one-letter code: DENN domain-containing protein 1A (1016 aa).

The uDENN domain maps to 13-145 (FEVYVEVAYP…HRLPIPDPGV (133 aa)). The cDENN domain maps to 162 to 298 (ELPSIPENRN…VISSLKNRLK (137 aa)). One can recognise a dDENN domain in the interval 300–378 (VSTTTGDGVA…DGRLDLLNSG (79 aa)). An FXDXF motif motif is present at residues 381–385 (FSDVF). Residues 453–565 (DITENGCVSS…GPTPAPPDRA (113 aa)) form a disordered region. At Ser-473 the chain carries Phosphoserine. The segment covering 479-489 (QDPRLREDRRP) has biased composition (basic and acidic residues). Basic residues predominate over residues 500 to 509 (PRPHVVRRPK). Thr-519 bears the Phosphothreonine mark. Phosphoserine occurs at positions 520, 522, 523, 536, 538, and 546. The short motif at 569 to 578 (DLLEDVFSSL) is the Clathrin box element. The residue at position 592 (Ser-592) is a Phosphoserine. Positions 681–737 (LSPSIKEETPIPTPGSITIPRPQGRKTPELGIVPPPPTARPAKLQAAGGPLGDFSSE) are disordered. A Phosphoserine modification is found at Ser-750. Residue Arg-760 is modified to Omega-N-methylarginine. Disordered regions lie at residues 763 to 783 (PQGP…AGTG) and 935 to 1016 (SARA…ETFE). A compositionally biased stretch (pro residues) spans 954–970 (LLPPRPPQSLQPTPQPS). 2 stretches are compositionally biased toward basic and acidic residues: residues 977-988 (DPFEDLLRKTKQ) and 1007-1016 (QLRRQWETFE).

In terms of assembly, interacts with RAB35. Interacts with clathrin and with the adapter protein complex 2, AP-2. Interacts with ITSN1 and SH3GL2. Interacts (when phosphorylated) with YWHAE. Phosphorylated on serine and/or threonine in an Akt-dependent manner. Phosphorylation probably regulates the guanine nucleotide exchange factor (GEF) activity, possibly by disrupting an intramolecular interaction between the DENN domain and the C-terminus of the protein, thereby relieving the autoinhibition.

Its subcellular location is the cytoplasmic vesicle. The protein localises to the clathrin-coated vesicle membrane. The protein resides in the presynaptic cell membrane. The guanine nucleotide exchange factor (GEF) activity is autoinhibited. Autoinhibition may be the result of intramolecular interaction between the DENN domain and the C-terminus, which is disrupted upon phosphorylation. Activation is regulated by Akt activation. Its function is as follows. Guanine nucleotide exchange factor (GEF) regulating clathrin-mediated endocytosis through RAB35 activation. Promotes the exchange of GDP to GTP, converting inactive GDP-bound RAB35 into its active GTP-bound form. Regulates clathrin-mediated endocytosis of synaptic vesicles and mediates exit from early endosomes. Binds phosphatidylinositol-phosphates (PtdInsPs), with some preference for PtdIns(3)P. The sequence is that of DENN domain-containing protein 1A (Dennd1a) from Mus musculus (Mouse).